Consider the following 332-residue polypeptide: dTDP-3,4-didehydro-2,6-dideoxy-alpha-D-glucose 3-reductase (332 aa).

17 to 23 serves as a coordination point for NADP(+); it reads CADIAWR. Arg24 contributes to the substrate binding site. NADP(+)-binding positions include 42–43, Tyr63, Leu79, and His84; that span reads SR. Lys102 acts as the Proton donor in catalysis. 2 residues coordinate NADP(+): Arg170 and Asp182. Tyr240 and Thr260 together coordinate substrate.

This sequence belongs to the Gfo/Idh/MocA family. In terms of assembly, homotetramer; dimer of dimers.

It catalyses the reaction dTDP-4-dehydro-2,6-dideoxy-alpha-D-glucose + NADP(+) = dTDP-3,4-didehydro-2,6-dideoxy-alpha-D-glucose + NADPH + H(+). The protein operates within antibiotic biosynthesis. In terms of biological role, involved in the biosynthesis of L-digitoxose, an unusual dideoxysugar attached to various pharmacologically active natural products, including the antitumor antibiotic tetrocarcin A, and the antibiotics kijanimicin and jadomycin B. Catalyzes the reduction of the C-3 keto moiety of dTDP-3,4-diketo-2,6-dideoxy-alpha-D-glucose to yield dTDP-4-keto-2,6-dideoxy-alpha-D-glucose. Also able to reduce dTDP-3-keto-6-deoxy-D-galactose and dTDP-3-keto-6-deoxy-D-glucose to yield dTDP-fucose and dTDP-quinovose, respectively. This Actinomadura kijaniata protein is dTDP-3,4-didehydro-2,6-dideoxy-alpha-D-glucose 3-reductase.